A 488-amino-acid polypeptide reads, in one-letter code: UDP-GalNAc:beta-1,3-N-acetylgalactosaminyltransferase 2 (488 aa).

Over 1 to 2 (MR) the chain is Cytoplasmic. The helical; Signal-anchor for type II membrane protein transmembrane segment at 3–23 (HLLLLFLCPCAIGVAFHLWLF) threads the bilayer. Asparagine 24, asparagine 105, and asparagine 162 each carry an N-linked (GlcNAc...) asparagine glycan. Over 24–488 (NFSGLFTWFP…CGNPCACEDR (465 aa)) the chain is Lumenal.

The protein belongs to the glycosyltransferase 31 family.

It localises to the golgi apparatus membrane. Its subcellular location is the endoplasmic reticulum. It catalyses the reaction 3-O-(N-acetyl-beta-D-glucosaminyl-(1-&gt;4)-alpha-D-mannosyl)-L-threonyl-[protein] + UDP-N-acetyl-alpha-D-galactosamine = 3-O-[beta-D-GalNAc-(1-&gt;3)-beta-D-GlcNAc-(1-&gt;4)-alpha-D-Man]-L-Thr-[protein] + UDP + H(+). The protein operates within protein modification; protein glycosylation. Beta-1,3-N-acetylgalactosaminyltransferase that synthesizes a unique carbohydrate structure, GalNAc-beta-1-3GlcNAc, on N- and O-glycans. Has no galactose nor galactosaminyl transferase activity toward any acceptor substrate. Involved in alpha-dystroglycan (dag1) glycosylation. This Xenopus tropicalis (Western clawed frog) protein is UDP-GalNAc:beta-1,3-N-acetylgalactosaminyltransferase 2 (b3galnt2).